The primary structure comprises 126 residues: Aspartate 1-decarboxylase (126 aa).

Ser25 acts as the Schiff-base intermediate with substrate; via pyruvic acid in catalysis. At Ser25 the chain carries Pyruvic acid (Ser). Thr57 serves as a coordination point for substrate. Residue Tyr58 is the Proton donor of the active site. Residue 73–75 (GGA) participates in substrate binding.

This sequence belongs to the PanD family. As to quaternary structure, heterooctamer of four alpha and four beta subunits. Requires pyruvate as cofactor. Post-translationally, is synthesized initially as an inactive proenzyme, which is activated by self-cleavage at a specific serine bond to produce a beta-subunit with a hydroxyl group at its C-terminus and an alpha-subunit with a pyruvoyl group at its N-terminus.

The protein resides in the cytoplasm. The enzyme catalyses L-aspartate + H(+) = beta-alanine + CO2. The protein operates within cofactor biosynthesis; (R)-pantothenate biosynthesis; beta-alanine from L-aspartate: step 1/1. Catalyzes the pyruvoyl-dependent decarboxylation of aspartate to produce beta-alanine. This Xanthomonas axonopodis pv. citri (strain 306) protein is Aspartate 1-decarboxylase.